A 141-amino-acid chain; its full sequence is MQLTSFTDYGLRALIYMASLPEGRMTSISEVTDVYGVSRNHMVKIINQLSRAGYVTAVRGKNGGIRLGKPASAIRIGDVVRELEPLSLVNCSSEFCHITPACRLKQALSKAVQSFLMELDNYTLADLVEENQPLYKLLLVE.

The region spanning Q2–E129 is the HTH rrf2-type domain. The segment at residues I28–R51 is a DNA-binding region (H-T-H motif). [2Fe-2S] cluster is bound by residues C91, C96, and C102.

[2Fe-2S] cluster serves as cofactor.

Nitric oxide-sensitive repressor of genes involved in protecting the cell against nitrosative stress. May require iron for activity. This is HTH-type transcriptional repressor NsrR from Escherichia fergusonii (strain ATCC 35469 / DSM 13698 / CCUG 18766 / IAM 14443 / JCM 21226 / LMG 7866 / NBRC 102419 / NCTC 12128 / CDC 0568-73).